A 494-amino-acid chain; its full sequence is Succinoglycan biosynthesis transport protein ExoT (494 aa).

The next 13 helical transmembrane spans lie at 16–36 (WSVLSKTGTFGLKFVTVPILA), 44–64 (FGAVAVALTVVQFLAMIGGAG), 82–102 (SVFWANLAIALMMALGLFVFA), 105–125 (LATLLGAPEAAYLLRIMSLLI), 157–177 (LGAVIAVLLALLGFGIWSLLA), 215–235 (FGMMGSEIANFITFQSPMVVI), 253–273 (FASIPNQVVLSAVMGVLFPTF), 297–317 (LLAPMMFGLWALAEPAMLVLF), 321–341 (WAYAWPVLGLLALSKGILTPC), 343–363 (TFIPYLKGVGQGAVLFWWALI), 384–404 (AMIWLCIVNAVTLVGYSWVVF), 421–441 (PMIAALLMALVVRFLLEHFGA), and 447–467 (VLQLIAGTAIGSVIYTVLILL).

This sequence belongs to the polysaccharide synthase family.

It localises to the cell membrane. Its pathway is glycan metabolism; exopolysaccharide biosynthesis. This Rhizobium meliloti (strain 1021) (Ensifer meliloti) protein is Succinoglycan biosynthesis transport protein ExoT (exoT).